We begin with the raw amino-acid sequence, 208 residues long: Large ribosomal subunit protein bL25 (208 aa).

Belongs to the bacterial ribosomal protein bL25 family. CTC subfamily. Part of the 50S ribosomal subunit; part of the 5S rRNA/L5/L18/L25 subcomplex. Contacts the 5S rRNA. Binds to the 5S rRNA independently of L5 and L18.

This is one of the proteins that binds to the 5S RNA in the ribosome where it forms part of the central protuberance. The chain is Large ribosomal subunit protein bL25 from Leptothrix cholodnii (strain ATCC 51168 / LMG 8142 / SP-6) (Leptothrix discophora (strain SP-6)).